Reading from the N-terminus, the 576-residue chain is MAGUK p55 subfamily member 7 (576 aa).

2 L27 domains span residues 10-63 (SDTG…YEKE) and 65-122 (PMPV…YDPV). The region spanning 139–220 (IIRLVKNREP…AITFKIIPSI (82 aa)) is the PDZ domain. One can recognise an SH3 domain in the interval 228–298 (DGKMFVKALF…PSKQFQERRF (71 aa)). The Guanylate kinase-like domain occupies 368–560 (YRLVILVGPV…AYNELRSTLE (193 aa)).

It belongs to the MAGUK family.

Its subcellular location is the membrane. The protein localises to the cell junction. It localises to the tight junction. The protein resides in the adherens junction. Acts as an important adapter that promotes epithelial cell polarity and tight junction formation. Involved in the assembly of protein complexes at sites of cell-cell contact. This is MAGUK p55 subfamily member 7 (mpp7) from Xenopus tropicalis (Western clawed frog).